Reading from the N-terminus, the 248-residue chain is Tyrosine recombinase XerD-like (248 aa).

Residues 1 to 72 (MKSYIEPFIA…TANQFLYYLY (72 aa)) enclose the Core-binding (CB) domain. Residues 85–248 (DTMKVMRTEK…PVTLEKYYKS (164 aa)) form the Tyr recombinase domain. Active-site residues include lysine 149 and arginine 213. The active-site O-(3'-phospho-DNA)-tyrosine intermediate is the tyrosine 245.

Belongs to the 'phage' integrase family. XerD-like subfamily.

It is found in the cytoplasm. Functionally, putative tyrosine recombinase. Not involved in the cutting and rejoining of the recombining DNA molecules on dif(SL) site. This is Tyrosine recombinase XerD-like from Streptococcus pyogenes serotype M28 (strain MGAS6180).